A 307-amino-acid chain; its full sequence is Methionyl-tRNA formyltransferase (307 aa).

Residue S109–P112 participates in (6S)-5,6,7,8-tetrahydrofolate binding.

The protein belongs to the Fmt family.

The catalysed reaction is L-methionyl-tRNA(fMet) + (6R)-10-formyltetrahydrofolate = N-formyl-L-methionyl-tRNA(fMet) + (6S)-5,6,7,8-tetrahydrofolate + H(+). In terms of biological role, attaches a formyl group to the free amino group of methionyl-tRNA(fMet). The formyl group appears to play a dual role in the initiator identity of N-formylmethionyl-tRNA by promoting its recognition by IF2 and preventing the misappropriation of this tRNA by the elongation apparatus. This Dechloromonas aromatica (strain RCB) protein is Methionyl-tRNA formyltransferase.